We begin with the raw amino-acid sequence, 178 residues long: Large ribosomal subunit protein uL6 (178 aa).

Belongs to the universal ribosomal protein uL6 family. In terms of assembly, part of the 50S ribosomal subunit.

This protein binds to the 23S rRNA, and is important in its secondary structure. It is located near the subunit interface in the base of the L7/L12 stalk, and near the tRNA binding site of the peptidyltransferase center. The chain is Large ribosomal subunit protein uL6 from Staphylococcus aureus (strain Mu3 / ATCC 700698).